We begin with the raw amino-acid sequence, 670 residues long: tRNA 5-methylaminomethyl-2-thiouridine biosynthesis bifunctional protein MnmC (670 aa).

A tRNA (mnm(5)s(2)U34)-methyltransferase region spans residues 1–242 (MTFSVQHAEI…KRECLSGLKI (242 aa)). An FAD-dependent cmnm(5)s(2)U34 oxidoreductase region spans residues 269-670 (IGGGIASLCA…KKWLKGSKVE (402 aa)).

The protein in the N-terminal section; belongs to the methyltransferase superfamily. tRNA (mnm(5)s(2)U34)-methyltransferase family. This sequence in the C-terminal section; belongs to the DAO family. Requires FAD as cofactor.

It is found in the cytoplasm. The catalysed reaction is 5-aminomethyl-2-thiouridine(34) in tRNA + S-adenosyl-L-methionine = 5-methylaminomethyl-2-thiouridine(34) in tRNA + S-adenosyl-L-homocysteine + H(+). Its function is as follows. Catalyzes the last two steps in the biosynthesis of 5-methylaminomethyl-2-thiouridine (mnm(5)s(2)U) at the wobble position (U34) in tRNA. Catalyzes the FAD-dependent demodification of cmnm(5)s(2)U34 to nm(5)s(2)U34, followed by the transfer of a methyl group from S-adenosyl-L-methionine to nm(5)s(2)U34, to form mnm(5)s(2)U34. This Haemophilus influenzae (strain PittGG) protein is tRNA 5-methylaminomethyl-2-thiouridine biosynthesis bifunctional protein MnmC.